The chain runs to 151 residues: VATPAMPSMTDAQVAAVKGDWEKIKGSGVEILYFFLNKFPGNFPMFKKLGNDLAAAKGTAEFKDQADKIIAFLQGVIEKLGSDMGGAKALLNQLGTSHKAMGITKDQFDQFRQALTELLGNLGFGGNIGAWNATVDLMFHVIFNALDGTPV.

A Globin domain is found at 8–147 (SMTDAQVAAV…MFHVIFNALD (140 aa)). His-98 serves as a coordination point for heme b.

It belongs to the globin family. In terms of assembly, monomer.

In Chironomus thummi thummi (Midge), this protein is Globin CTT-IIIA.